The following is a 722-amino-acid chain: Ataxin-7-like protein 2 (722 aa).

Disordered stretches follow at residues 106 to 228, 288 to 317, 347 to 403, and 531 to 600; these read LSKL…PPKT, NSRK…LPSS, SRAS…DCHY, and AITS…GCRG. A compositionally biased stretch (pro residues) spans 181 to 191; the sequence is GKPPMAPPSKE. Residues 230–297 enclose the SCA7 domain; it reads RKMARKECDL…NSRKGESPKE (68 aa). Residues 290-311 are compositionally biased toward basic and acidic residues; sequence RKGESPKEKSPGRKEQVLERPS. A compositionally biased stretch (low complexity) spans 541 to 556; the sequence is PSPSFSKLPPSKASKS. Over residues 558-569 the composition is skewed to basic and acidic residues; the sequence is KGKDGVEVEAPS. The residue at position 575 (Ser575) is a Phosphoserine.

The protein is Ataxin-7-like protein 2 (ATXN7L2) of Homo sapiens (Human).